An 855-amino-acid polypeptide reads, in one-letter code: Envelope glycoprotein gp160 (855 aa).

An N-terminal signal peptide occupies residues 1-31 (MTARGTRKNYQRLWRWGTMLLGMLMICSAAE). Over 32-683 (NLWVTVYYGV…ITNWLWYIRI (652 aa)) the chain is Extracellular. Cys53 and Cys73 form a disulfide bridge. Residues Asn87, Asn134, Asn142, Asn145, Asn161, Asn165, Asn192, Asn202, Asn239, Asn246, Asn267, Asn281, Asn294, Asn300, Asn306, Asn336, and Asn359 are each glycosylated (N-linked (GlcNAc...) asparagine; by host). 5 disulfides stabilise this stretch: Cys118/Cys210, Cys125/Cys201, Cys130/Cys162, Cys223/Cys252, and Cys233/Cys244. Residues 130–161 (CTDVNTTSSSLRNATNTTSSSWETMEKGELKN) are V1. The interval 162-201 (CSFNTTTSIRDKMQEQYALFYKLDVLPIDKNDTKFRLIHC) is V2. The V3 stretch occupies residues 301–334 (CTRPNNNTRNRISIGPGRAFHTTKQIIGDIRQAH). An intrachain disulfide couples Cys301 to Cys335. Residues 367 to 377 (SSGGDPEIVMH) are CD4-binding loop. Disulfide bonds link Cys381/Cys442 and Cys388/Cys415. The V4 stretch occupies residues 388–415 (CNTSQLFNSTWNDTTRANSTEVTITLPC). Asn389, Asn395, Asn399, Asn405, and Asn458 each carry an N-linked (GlcNAc...) asparagine; by host glycan. V5 regions lie at residues 458–469 (NTTNGIEIFRPA) and 460–469 (TNGIEIFRPA). A fusion peptide region spans residues 510–531 (AVGMLGAMFLGFLGAAGSTMGA). Positions 573-591 (KQLQARVLAVERYLKDQQL) are immunosuppression. The cysteines at positions 597 and 603 are disulfide-linked. Residues Asn610, Asn615, Asn624, and Asn636 are each glycosylated (N-linked (GlcNAc...) asparagine; by host). The stretch at 632-666 (REIDNYTHLIYTLIEESQNQQEKNEQELLELDKWA) forms a coiled coil. Positions 661–682 (ELDKWAGLWSWFSITNWLWYIR) are MPER; binding to GalCer. The chain crosses the membrane as a helical span at residues 684 to 704 (FIIIVGGLVGLRIVFAVLSIV). The Cytoplasmic segment spans residues 705-855 (NRVRQGYSPL…IRQGLERALL (151 aa)). The short motif at 711 to 714 (YSPL) is the YXXL motif; contains endocytosis signal element. A disordered region spans residues 718–742 (TRLPTQRGPDRPEGIEEEGGERDRD). Residue Cys763 is the site of S-palmitoyl cysteine; by host attachment. The Di-leucine internalization motif motif lies at 854–855 (LL).

Belongs to the HIV-1 env protein family. In terms of assembly, the mature envelope protein (Env) consists of a homotrimer of non-covalently associated gp120-gp41 heterodimers. The resulting complex protrudes from the virus surface as a spike. There seems to be as few as 10 spikes on the average virion. Interacts with host CD4, CCR5 and CXCR4. Gp120 also interacts with the C-type lectins CD209/DC-SIGN and CLEC4M/DC-SIGNR (collectively referred to as DC-SIGN(R)). Gp120 and gp41 interact with GalCer. Gp120 interacts with host ITGA4/ITGB7 complex; on CD4+ T-cells, this interaction results in rapid activation of integrin ITGAL/LFA-1, which facilitates efficient cell-to-cell spreading of HIV-1. Gp120 interacts with cell-associated heparan sulfate; this interaction increases virus infectivity on permissive cells and may be involved in infection of CD4- cells. The mature envelope protein (Env) consists of a homotrimer of non-covalently associated gp120-gp41 heterodimers. The resulting complex protrudes from the virus surface as a spike. There seems to be as few as 10 spikes on the average virion. Highly glycosylated by host. The high number of glycan on the protein is reffered to as 'glycan shield' because it contributes to hide protein sequence from adaptive immune system. In terms of processing, palmitoylation of the transmembrane protein and of Env polyprotein (prior to its proteolytic cleavage) is essential for their association with host cell membrane lipid rafts. Palmitoylation is therefore required for envelope trafficking to classical lipid rafts, but not for viral replication. Post-translationally, specific enzymatic cleavages in vivo yield mature proteins. Envelope glycoproteins are synthesized as an inactive precursor that is heavily N-glycosylated and processed likely by host cell furin in the Golgi to yield the mature SU and TM proteins. The cleavage site between SU and TM requires the minimal sequence [KR]-X-[KR]-R. About 2 of the 9 disulfide bonds of gp41 are reduced by P4HB/PDI, following binding to CD4 receptor.

The protein resides in the virion membrane. The protein localises to the host cell membrane. It localises to the host endosome membrane. In terms of biological role, oligomerizes in the host endoplasmic reticulum into predominantly trimers. In a second time, gp160 transits in the host Golgi, where glycosylation is completed. The precursor is then proteolytically cleaved in the trans-Golgi and thereby activated by cellular furin or furin-like proteases to produce gp120 and gp41. Its function is as follows. Attaches the virus to the host lymphoid cell by binding to the primary receptor CD4. This interaction induces a structural rearrangement creating a high affinity binding site for a chemokine coreceptor like CXCR4 and/or CCR5. Acts as a ligand for CD209/DC-SIGN and CLEC4M/DC-SIGNR, which are respectively found on dendritic cells (DCs), and on endothelial cells of liver sinusoids and lymph node sinuses. These interactions allow capture of viral particles at mucosal surfaces by these cells and subsequent transmission to permissive cells. HIV subverts the migration properties of dendritic cells to gain access to CD4+ T-cells in lymph nodes. Virus transmission to permissive T-cells occurs either in trans (without DCs infection, through viral capture and transmission), or in cis (following DCs productive infection, through the usual CD4-gp120 interaction), thereby inducing a robust infection. In trans infection, bound virions remain infectious over days and it is proposed that they are not degraded, but protected in non-lysosomal acidic organelles within the DCs close to the cell membrane thus contributing to the viral infectious potential during DCs' migration from the periphery to the lymphoid tissues. On arrival at lymphoid tissues, intact virions recycle back to DCs' cell surface allowing virus transmission to CD4+ T-cells. Functionally, acts as a class I viral fusion protein. Under the current model, the protein has at least 3 conformational states: pre-fusion native state, pre-hairpin intermediate state, and post-fusion hairpin state. During fusion of viral and target intracellular membranes, the coiled coil regions (heptad repeats) assume a trimer-of-hairpins structure, positioning the fusion peptide in close proximity to the C-terminal region of the ectodomain. The formation of this structure appears to drive apposition and subsequent fusion of viral and target cell membranes. Complete fusion occurs in host cell endosomes and is dynamin-dependent, however some lipid transfer might occur at the plasma membrane. The virus undergoes clathrin-dependent internalization long before endosomal fusion, thus minimizing the surface exposure of conserved viral epitopes during fusion and reducing the efficacy of inhibitors targeting these epitopes. Membranes fusion leads to delivery of the nucleocapsid into the cytoplasm. The chain is Envelope glycoprotein gp160 from Homo sapiens (Human).